The chain runs to 216 residues: tRNA (guanine-N(7)-)-methyltransferase (216 aa).

Positions 44, 69, 97, and 119 each coordinate S-adenosyl-L-methionine. Aspartate 119 is a catalytic residue. Residues lysine 123, aspartate 155, and 192–195 contribute to the substrate site; that span reads TEYE.

The protein belongs to the class I-like SAM-binding methyltransferase superfamily. TrmB family.

The catalysed reaction is guanosine(46) in tRNA + S-adenosyl-L-methionine = N(7)-methylguanosine(46) in tRNA + S-adenosyl-L-homocysteine. It participates in tRNA modification; N(7)-methylguanine-tRNA biosynthesis. Its function is as follows. Catalyzes the formation of N(7)-methylguanine at position 46 (m7G46) in tRNA. This is tRNA (guanine-N(7)-)-methyltransferase from Lysinibacillus sphaericus (strain C3-41).